We begin with the raw amino-acid sequence, 175 residues long: Apoptosis regulatory protein Siva (175 aa).

Tyr34 carries the phosphotyrosine; by ABL2 modification. An interaction with BCL2L1 isoform Bcl-x(L) and inhibition of BCL2L1 anti-apoptotic activity region spans residues 36-55 (QEVFEKTKRLLFLGAQAYLD). Position 70 is a phosphoserine (Ser70). The tract at residues 105 to 123 (DPSGVASIACSSCVRAVDG) is interaction with coxsackievirus B3 VP2.

In terms of assembly, binds through its N-terminal region to the C-terminus of CD27 and to PXMP2/PMP22. Binds to the C-terminus of TNFRSF18/GITR. Isoform 1 binds to BCL2L1/BCLX isoform Bcl-x(L) but not to BAX. As to quaternary structure, (Microbial infection) Interacts with coxsackievirus B3 capsid protein VP2; this interaction inhibits the binding of SIVA1 to CD27. The cofactor is Zn(2+). Phosphorylated by ABL2/ARG in response to oxidative stress. In terms of tissue distribution, ubiquitous. Mostly expressed in thymus, testis, ovary, prostate, small intestine and spleen and less in colon.

It is found in the cytoplasm. The protein resides in the nucleus. Its function is as follows. Induces CD27-mediated apoptosis. Inhibits BCL2L1 isoform Bcl-x(L) anti-apoptotic activity. Inhibits activation of NF-kappa-B and promotes T-cell receptor-mediated apoptosis. This is Apoptosis regulatory protein Siva (SIVA1) from Homo sapiens (Human).